We begin with the raw amino-acid sequence, 295 residues long: 4-hydroxy-tetrahydrodipicolinate synthase (295 aa).

Threonine 46 is a binding site for pyruvate. Residue tyrosine 135 is the Proton donor/acceptor of the active site. Lysine 164 (schiff-base intermediate with substrate) is an active-site residue. Isoleucine 205 is a binding site for pyruvate.

It belongs to the DapA family. As to quaternary structure, homotetramer; dimer of dimers.

Its subcellular location is the cytoplasm. The catalysed reaction is L-aspartate 4-semialdehyde + pyruvate = (2S,4S)-4-hydroxy-2,3,4,5-tetrahydrodipicolinate + H2O + H(+). The protein operates within amino-acid biosynthesis; L-lysine biosynthesis via DAP pathway; (S)-tetrahydrodipicolinate from L-aspartate: step 3/4. Its function is as follows. Catalyzes the condensation of (S)-aspartate-beta-semialdehyde [(S)-ASA] and pyruvate to 4-hydroxy-tetrahydrodipicolinate (HTPA). This is 4-hydroxy-tetrahydrodipicolinate synthase from Aliarcobacter butzleri (strain RM4018) (Arcobacter butzleri).